The primary structure comprises 734 residues: Methylcrotonoyl-CoA carboxylase subunit alpha, mitochondrial (734 aa).

Residues 1–25 constitute a mitochondrion transit peptide; the sequence is MSMMTVWALRRNVRRKNHSMLVRYI. In terms of domain architecture, Biotin carboxylation spans 37–484; the sequence is CIEKILVANR…ETHFIEHHKS (448 aa). The ATP site is built by K152, E236, and H271. The ATP-grasp domain occupies 156-354; that stretch reads KRIMGAAGVP…LVEWQIRVAN (199 aa). Mn(2+)-binding residues include E311, E325, and N327. Residue R329 is part of the active site. S645 is modified (phosphoserine). The interval 645-666 is disordered; it reads SEDEEGVQHRTSSETSSHPPGT. Residues 657-733 form the Biotinyl-binding domain; it reads SETSSHPPGT…SDGSALFRIK (77 aa). N6-biotinyllysine is present on K699.

Probably a heterodimer composed of biotin-containing alpha subunits and beta subunits. Requires biotin as cofactor. It depends on Mn(2+) as a cofactor. In terms of tissue distribution, in roots, cotyledons, leaves, flowers, ovaries, siliques and embryos.

It is found in the mitochondrion matrix. The enzyme catalyses 3-methylbut-2-enoyl-CoA + hydrogencarbonate + ATP = 3-methyl-(2E)-glutaconyl-CoA + ADP + phosphate + H(+). Its pathway is amino-acid degradation; L-leucine degradation; (S)-3-hydroxy-3-methylglutaryl-CoA from 3-isovaleryl-CoA: step 2/3. Its function is as follows. Biotin-attachment subunit of the 3-methylcrotonyl-CoA carboxylase, an enzyme that catalyzes the conversion of 3-methylcrotonyl-CoA to 3-methylglutaconyl-CoA, a critical step for leucine and isovaleric acid catabolism. The sequence is that of Methylcrotonoyl-CoA carboxylase subunit alpha, mitochondrial (MCCA) from Arabidopsis thaliana (Mouse-ear cress).